The chain runs to 369 residues: ATP-dependent 6-phosphofructokinase (369 aa).

ATP-binding positions include G15, 81–82 (KG), and 108–111 (GDGS). D109 serves as a coordination point for Mg(2+). Substrate contacts are provided by residues 132–134 (TID), R169, 176–178 (MGR), E230, R266, and 272–275 (HIQR). D134 acts as the Proton acceptor in catalysis.

The protein belongs to the phosphofructokinase type A (PFKA) family. Mixed-substrate PFK group III subfamily. As to quaternary structure, homodimer or homotetramer. The cofactor is Mg(2+).

Its subcellular location is the cytoplasm. The catalysed reaction is beta-D-fructose 6-phosphate + ATP = beta-D-fructose 1,6-bisphosphate + ADP + H(+). It functions in the pathway carbohydrate degradation; glycolysis; D-glyceraldehyde 3-phosphate and glycerone phosphate from D-glucose: step 3/4. Its function is as follows. Catalyzes the phosphorylation of D-fructose 6-phosphate to fructose 1,6-bisphosphate by ATP, the first committing step of glycolysis. The chain is ATP-dependent 6-phosphofructokinase from Thermosynechococcus vestitus (strain NIES-2133 / IAM M-273 / BP-1).